Here is a 387-residue protein sequence, read N- to C-terminus: 3-ketoacyl-CoA thiolase (387 aa).

The active-site Acyl-thioester intermediate is the Cys91. Active-site proton acceptor residues include His343 and Cys373.

Belongs to the thiolase-like superfamily. Thiolase family. In terms of assembly, heterotetramer of two alpha chains (FadB) and two beta chains (FadA).

It localises to the cytoplasm. The catalysed reaction is an acyl-CoA + acetyl-CoA = a 3-oxoacyl-CoA + CoA. It participates in lipid metabolism; fatty acid beta-oxidation. Catalyzes the final step of fatty acid oxidation in which acetyl-CoA is released and the CoA ester of a fatty acid two carbons shorter is formed. The chain is 3-ketoacyl-CoA thiolase from Enterobacter sp. (strain 638).